The following is an 82-amino-acid chain: Small ribosomal subunit protein bS18 (82 aa).

The disordered stretch occupies residues 1–20 (MSEASSAPVRRPFHRRRKTC).

It belongs to the bacterial ribosomal protein bS18 family. In terms of assembly, part of the 30S ribosomal subunit. Forms a tight heterodimer with protein bS6.

In terms of biological role, binds as a heterodimer with protein bS6 to the central domain of the 16S rRNA, where it helps stabilize the platform of the 30S subunit. This chain is Small ribosomal subunit protein bS18, found in Rhizobium etli (strain CIAT 652).